A 269-amino-acid chain; its full sequence is Alcohol dehydrogenase-related 31 kDa protein (269 aa).

11–34 (YVADCGGIALETCKVLMTKNIAKL) serves as a coordination point for NAD(+). Ser139 lines the substrate pocket. Tyr152 (proton acceptor) is an active-site residue.

This sequence belongs to the short-chain dehydrogenases/reductases (SDR) family.

The sequence is that of Alcohol dehydrogenase-related 31 kDa protein (Adhr) from Drosophila lebanonensis (Fruit fly).